Here is a 160-residue protein sequence, read N- to C-terminus: Phosphopantetheine adenylyltransferase (160 aa).

T11 is a binding site for substrate. Residues 11–12 and H19 contribute to the ATP site; that span reads TF. Substrate contacts are provided by K43, L75, and R89. ATP-binding positions include 90 to 92, E100, and 125 to 131; these read GLR and HMFVSAS.

It belongs to the bacterial CoaD family. As to quaternary structure, homohexamer. It depends on Mg(2+) as a cofactor.

The protein localises to the cytoplasm. The enzyme catalyses (R)-4'-phosphopantetheine + ATP + H(+) = 3'-dephospho-CoA + diphosphate. The protein operates within cofactor biosynthesis; coenzyme A biosynthesis; CoA from (R)-pantothenate: step 4/5. Reversibly transfers an adenylyl group from ATP to 4'-phosphopantetheine, yielding dephospho-CoA (dPCoA) and pyrophosphate. The sequence is that of Phosphopantetheine adenylyltransferase from Methylobacillus flagellatus (strain ATCC 51484 / DSM 6875 / VKM B-1610 / KT).